The following is a 358-amino-acid chain: Protein SRG1 (358 aa).

Positions 209–309 constitute a Fe2OG dioxygenase domain; sequence SVQSMRMNYY…RLSIATFHNV (101 aa). 3 residues coordinate Fe cation: histidine 233, aspartate 235, and histidine 290.

It belongs to the iron/ascorbate-dependent oxidoreductase family. Low expression in roots and leaves.

This is Protein SRG1 (SRG1) from Arabidopsis thaliana (Mouse-ear cress).